Consider the following 274-residue polypeptide: Putative hydro-lyase Veis_4744 (274 aa).

Belongs to the D-glutamate cyclase family.

This is Putative hydro-lyase Veis_4744 from Verminephrobacter eiseniae (strain EF01-2).